Consider the following 204-residue polypeptide: Dephospho-CoA kinase (204 aa).

The DPCK domain maps to 13–204 (RIGLTGGIAS…LWKNTIKKLV (192 aa)). 21–26 (ASGKST) lines the ATP pocket.

Belongs to the CoaE family.

It is found in the cytoplasm. The catalysed reaction is 3'-dephospho-CoA + ATP = ADP + CoA + H(+). It participates in cofactor biosynthesis; coenzyme A biosynthesis; CoA from (R)-pantothenate: step 5/5. Functionally, catalyzes the phosphorylation of the 3'-hydroxyl group of dephosphocoenzyme A to form coenzyme A. In Prochlorococcus marinus subsp. pastoris (strain CCMP1986 / NIES-2087 / MED4), this protein is Dephospho-CoA kinase.